A 1414-amino-acid polypeptide reads, in one-letter code: Phenyloxazoline synthase MbtB (1414 aa).

In terms of domain architecture, Carrier 1 spans 5 to 78; that stretch reads TACSEIIRAE…AWSQLVSAGT (74 aa). At S39 the chain carries O-(pantetheine 4'-phosphoryl)serine. Positions 96 to 394 are condensation/cyclization; the sequence is EGEPFPLAPM…SSLLLDVDLT (299 aa). The tract at residues 579–975 is adenylation; it reads SYAQLRDQAS…RLPGVHAAAA (397 aa). Positions 1057–1135 constitute a Carrier 2 domain; that stretch reads APRTVLQRAL…ALAQLLTGRE (79 aa). An O-(pantetheine 4'-phosphoryl)serine modification is found at S1094. The thioesterase stretch occupies residues 1188-1413; sequence GAVLVFPHAG…AVARMVSADV (226 aa).

It belongs to the ATP-dependent AMP-binding enzyme family. MbtB subfamily. Pantetheine 4'-phosphate is required as a cofactor. In terms of processing, 4'-phosphopantetheine is transferred from CoA to a specific serine in each of the two carrier protein domains, leading to their activation from apo to holo forms.

The protein operates within siderophore biosynthesis; mycobactin biosynthesis. In terms of biological role, involved in the initial steps of the mycobactin biosynthetic pathway. Putatively couples activated salicylic acid with serine or threonine and cyclizes this precursor to the hydroxyphenyloxazoline ring system present in this class of siderophores. Essential for growth in macrophages. In Mycobacterium tuberculosis (strain ATCC 25618 / H37Rv), this protein is Phenyloxazoline synthase MbtB (mbtB).